The primary structure comprises 543 residues: Oligopeptide-binding protein AppA (543 aa).

An N-terminal signal peptide occupies residues 1 to 23; the sequence is MKRRKTALMMLSVLMVLAIFLSA. C24 carries the N-palmitoyl cysteine lipid modification. C24 carries the S-diacylglycerol cysteine lipid modification.

The protein belongs to the bacterial solute-binding protein 5 family.

The protein resides in the cell membrane. In terms of biological role, this protein is a component of an oligopeptide permease, a binding protein-dependent transport system. This APP system can completely substitute for the OPP system in both sporulation and genetic competence. AppA can bind and transport tetra- and pentapeptides but not tripeptides. This is Oligopeptide-binding protein AppA (appA) from Bacillus subtilis (strain 168).